We begin with the raw amino-acid sequence, 325 residues long: ATP phosphoribosyltransferase (325 aa).

This sequence belongs to the ATP phosphoribosyltransferase family. Long subfamily. Mg(2+) is required as a cofactor.

The protein resides in the cytoplasm. The enzyme catalyses 1-(5-phospho-beta-D-ribosyl)-ATP + diphosphate = 5-phospho-alpha-D-ribose 1-diphosphate + ATP. It functions in the pathway amino-acid biosynthesis; L-histidine biosynthesis; L-histidine from 5-phospho-alpha-D-ribose 1-diphosphate: step 1/9. Feedback inhibited by histidine. Catalyzes the condensation of ATP and 5-phosphoribose 1-diphosphate to form N'-(5'-phosphoribosyl)-ATP (PR-ATP). Has a crucial role in the pathway because the rate of histidine biosynthesis seems to be controlled primarily by regulation of HisG enzymatic activity. The chain is ATP phosphoribosyltransferase from Bradyrhizobium sp. (strain ORS 278).